Here is a 225-residue protein sequence, read N- to C-terminus: Riboflavin kinase (225 aa).

A unknown region spans residues 1–89 (MPDIKYLKKL…SRIFSPDLDI (89 aa)). Residues 90–225 (LELEGKVLKG…LKKQGTENQK (136 aa)) form a riboflavin kinase region. 99–104 (GLGEGQ) contributes to the CDP binding site. Mg(2+)-binding residues include T128 and N130. Positions 185 and 193 each coordinate FMN. 198–201 (IKLR) lines the CDP pocket.

Belongs to the archaeal riboflavin kinase family. Mg(2+) serves as cofactor.

The enzyme catalyses riboflavin + CTP = CDP + FMN + H(+). Its pathway is cofactor biosynthesis; FMN biosynthesis; FMN from riboflavin (CTP route): step 1/1. In terms of biological role, catalyzes the CTP-dependent phosphorylation of riboflavin (vitamin B2) to form flavin mononucleotide (FMN). This Methanosarcina barkeri (strain Fusaro / DSM 804) protein is Riboflavin kinase (ribK).